The sequence spans 416 residues: Homogentisate 1,2-dioxygenase (416 aa).

Histidine 275 (proton acceptor) is an active-site residue. Positions 318 and 324 each coordinate Fe cation. Residues tyrosine 333 and histidine 354 each coordinate homogentisate. Residue histidine 354 coordinates Fe cation.

This sequence belongs to the homogentisate dioxygenase family. As to quaternary structure, hexamer; dimer of trimers. Fe cation is required as a cofactor.

It catalyses the reaction homogentisate + O2 = 4-maleylacetoacetate + H(+). The protein operates within amino-acid degradation; L-phenylalanine degradation; acetoacetate and fumarate from L-phenylalanine: step 4/6. In terms of biological role, involved in the catabolism of homogentisate (2,5-dihydroxyphenylacetate or 2,5-OH-PhAc), a central intermediate in the degradation of phenylalanine and tyrosine. Catalyzes the oxidative ring cleavage of the aromatic ring of homogentisate to yield maleylacetoacetate. This Legionella pneumophila (strain Corby) protein is Homogentisate 1,2-dioxygenase.